The primary structure comprises 206 residues: Acireductone dioxygenase (206 aa).

Residues His102, His104, Glu108, and His146 each contribute to the Fe(2+) site. Residues His102, His104, Glu108, and His146 each contribute to the Ni(2+) site.

It belongs to the acireductone dioxygenase (ARD) family. In terms of assembly, monomer. The cofactor is Fe(2+). Requires Ni(2+) as cofactor.

The catalysed reaction is 1,2-dihydroxy-5-(methylsulfanyl)pent-1-en-3-one + O2 = 3-(methylsulfanyl)propanoate + CO + formate + 2 H(+). It carries out the reaction 1,2-dihydroxy-5-(methylsulfanyl)pent-1-en-3-one + O2 = 4-methylsulfanyl-2-oxobutanoate + formate + 2 H(+). Its pathway is amino-acid biosynthesis; L-methionine biosynthesis via salvage pathway; L-methionine from S-methyl-5-thio-alpha-D-ribose 1-phosphate: step 5/6. Its function is as follows. Catalyzes 2 different reactions between oxygen and the acireductone 1,2-dihydroxy-3-keto-5-methylthiopentene (DHK-MTPene) depending upon the metal bound in the active site. Fe-containing acireductone dioxygenase (Fe-ARD) produces formate and 2-keto-4-methylthiobutyrate (KMTB), the alpha-ketoacid precursor of methionine in the methionine recycle pathway. Ni-containing acireductone dioxygenase (Ni-ARD) produces methylthiopropionate, carbon monoxide and formate, and does not lie on the methionine recycle pathway. This chain is Acireductone dioxygenase, found in Frankia alni (strain DSM 45986 / CECT 9034 / ACN14a).